A 602-amino-acid polypeptide reads, in one-letter code: Adenylosuccinate synthetase (602 aa).

Residues 74-80 (GDEGKGK) and 104-106 (GHT) contribute to the GTP site. The Proton acceptor role is filled by aspartate 75. Mg(2+)-binding residues include aspartate 75 and glycine 104. Residues 75 to 78 (DEGK), 102 to 105 (NAGH), threonine 189, lysine 203, glutamine 315, threonine 331, and lysine 459 each bind IMP. Residue histidine 105 is the Proton donor of the active site. Residue 455–461 (AVTKKPR) coordinates substrate. GTP contacts are provided by residues arginine 461 and 589–591 (GNG).

It belongs to the adenylosuccinate synthetase family. As to quaternary structure, homodimer. Mg(2+) serves as cofactor.

The protein resides in the cytoplasm. It carries out the reaction IMP + L-aspartate + GTP = N(6)-(1,2-dicarboxyethyl)-AMP + GDP + phosphate + 2 H(+). It participates in purine metabolism; AMP biosynthesis via de novo pathway; AMP from IMP: step 1/2. In terms of biological role, plays an important role in the salvage pathway for purine nucleotide biosynthesis. Catalyzes the first committed step in the biosynthesis of AMP from IMP. The chain is Adenylosuccinate synthetase from Trypanosoma brucei gambiense (strain MHOM/CI/86/DAL972).